A 436-amino-acid polypeptide reads, in one-letter code: Protein GOLM2 (436 aa).

Residue methionine 1 is modified to N-acetylmethionine. Over 1–14 (MVGFGANRRAGRLP) the chain is Cytoplasmic. Residues 15–35 (SLVLVVLLVVIVVLAFNYWSI) form a helical; Signal-anchor for type II membrane protein membrane-spanning segment. The stretch at 35–198 (ISSRHVLLQE…EEQKQETQKI (164 aa)) forms a coiled coil. Topologically, residues 36–436 (SSRHVLLQEE…YGKQHFNDVL (401 aa)) are lumenal. The span at 225 to 247 (ADKNEEPSSNHIPHGKEQIKRGG) shows a compositional bias: basic and acidic residues. Positions 225–436 (ADKNEEPSSN…YGKQHFNDVL (212 aa)) are disordered. Phosphoserine is present on residues serine 233 and serine 275. Over residues 305–321 (NHNGNPGTSKQNPSSPL) the composition is skewed to polar residues. Residues serine 328 and serine 332 each carry the phosphoserine modification. Over residues 344–362 (ATKDRVSDFHKLKQSRFFD) the composition is skewed to basic and acidic residues. Serine 366 bears the Phosphoserine mark. The span at 399–418 (YNEEEDGDGGEEDVQDDEER) shows a compositional bias: acidic residues. Over residues 426-436 (DYGKQHFNDVL) the composition is skewed to basic and acidic residues.

The protein belongs to the GOLM family.

It is found in the membrane. The chain is Protein GOLM2 from Homo sapiens (Human).